A 435-amino-acid polypeptide reads, in one-letter code: Zinc finger CCCH domain-containing protein 16 (435 aa).

Residues 1–27 (MRKELCRNFQRGSCRYGENCRFLHPQQ) form a C3H1-type zinc finger. A 6 X 2 AA repeats of F-G region spans residues 2 to 88 (RKELCRNFQR…ASTPTGGGAA (87 aa)). Disordered stretches follow at residues 25-105 (PQQA…DHKC) and 205-374 (TPSI…SQNN). Repeat copies occupy residues 34–35 (FG) and 36–37 (FG). Residues 39 to 51 (QNQQQQQQQQQQN) show a composition bias toward low complexity. A run of 2 repeats spans residues 56 to 57 (FG) and 58 to 59 (FG). The span at 63-77 (GGSSRPNQFQNTWSR) shows a compositional bias: polar residues. Residues 78 to 99 (TASTPTGGGAAASTQQTGKQTQ) are compositionally biased toward low complexity. Composition is skewed to polar residues over residues 205 to 320 (TPSI…VNTP) and 328 to 339 (SGFQTNPSTTFK). 2 tandem repeats follow at residues 343 to 344 (FG) and 359 to 360 (FG). Positions 351-374 (TTPQNNNIFGQSTPTPATNTSQNN) are enriched in polar residues.

Part of the nuclear pore complex (NPC). The NPC has an eight-fold symmetrical structure comprising a central transport channel and two rings, the cytoplasmic and nuclear rings, to which eight filaments are attached. The cytoplasmic filaments have loose ends, while the nuclear filaments are joined in a distal ring, forming a nuclear basket. NPCs are highly dynamic in configuration and composition, and can be devided in 3 subcomplexes, the NUP62 subcomplex, the NUP107-160 subcomplex and the NUP93 subcomplex, containing approximately 30 different nucleoporin proteins.

The protein resides in the nucleus envelope. It is found in the nucleus. The protein localises to the nuclear pore complex. The protein is Zinc finger CCCH domain-containing protein 16 of Arabidopsis thaliana (Mouse-ear cress).